The primary structure comprises 1136 residues: Tyrosine-protein kinase receptor Tie-1 (1136 aa).

The N-terminal stretch at 1–23 is a signal peptide; that stretch reads MVWLEPPLLLPIFFLASHVGAAV. The Extracellular segment spans residues 24–757; it reads DLTLLADLRL…IHAAEEGLDQ (734 aa). In terms of domain architecture, Ig-like C2-type 1 spans 43–106; the sequence is CVSGEAGAGR…PSDLVGVFSC (64 aa). Residues N84 and N159 are each glycosylated (N-linked (GlcNAc...) asparagine). 3 consecutive EGF-like domains span residues 212 to 254, 256 to 301, and 303 to 343; these read GCEA…TRCE, ACRE…SQCQ, and ACAP…MHCE. Disulfide bonds link C226/C235, C229/C242, and C244/C253. Disulfide bonds link C317-C325, C319-C331, and C333-C342. Positions 370–424 constitute an Ig-like C2-type 2 domain; that stretch reads CAAAGNPFPVRGSMELRKPDGTVLLSTKAIVEPDRTTAEFEVPRLALGDSGLWEC. 3 Fibronectin type-III domains span residues 444-543, 546-640, and 644-737; these read PPVP…CPEP, KPWL…LPPS, and APRH…TLGN. 3 N-linked (GlcNAc...) asparagine glycosylation sites follow: N501, N594, and N707. The chain crosses the membrane as a helical span at residues 758–782; it reads QLVLAVVGSVSATCLTILAALLTLA. The Cytoplasmic portion of the chain corresponds to 783–1136; that stretch reads CIRKSCLHRR…AGIDATAEEA (354 aa). One can recognise a Protein kinase domain in the interval 837-1116; sequence ITFEDLIGEG…RMLEARKAYV (280 aa). ATP is bound by residues 843–851 and K868; that span reads IGEGNFGQV. The active-site Proton acceptor is the D977. Position 1005 is a phosphotyrosine; by autocatalysis (Y1005).

The protein belongs to the protein kinase superfamily. Tyr protein kinase family. Tie subfamily. In terms of assembly, heterodimer with TEK/TIE2. Interacts with SVEP1 (via C-terminus). Phosphorylated on tyrosine residues in response to ANGPT1, most likely by TEK/TIE2. Specifically expressed in developing vascular endothelial cells.

The protein resides in the cell membrane. The catalysed reaction is L-tyrosyl-[protein] + ATP = O-phospho-L-tyrosyl-[protein] + ADP + H(+). Functionally, transmembrane tyrosine-protein kinase that may modulate TEK/TIE2 activity and contribute to the regulation of angiogenesis. The chain is Tyrosine-protein kinase receptor Tie-1 (TIE1) from Bos taurus (Bovine).